The primary structure comprises 281 residues: Small ribosomal subunit biogenesis GTPase RsgA (281 aa).

Residues 59-212 form the CP-type G domain; it reads QNEFIRPKVA…LIDTPGFSSL (154 aa). GTP contacts are provided by residues 108–111 and 155–163; these read TKAD and GQSGVGKTT. Zn(2+) is bound by residues Cys-235, Cys-240, His-242, and Cys-250.

It belongs to the TRAFAC class YlqF/YawG GTPase family. RsgA subfamily. Monomer. Associates with 30S ribosomal subunit, binds 16S rRNA. Requires Zn(2+) as cofactor.

The protein localises to the cytoplasm. Functionally, one of several proteins that assist in the late maturation steps of the functional core of the 30S ribosomal subunit. Helps release RbfA from mature subunits. May play a role in the assembly of ribosomal proteins into the subunit. Circularly permuted GTPase that catalyzes slow GTP hydrolysis, GTPase activity is stimulated by the 30S ribosomal subunit. This is Small ribosomal subunit biogenesis GTPase RsgA from Mycoplasmopsis agalactiae (strain NCTC 10123 / CIP 59.7 / PG2) (Mycoplasma agalactiae).